A 1141-amino-acid chain; its full sequence is Isoleucine--tRNA ligase, cytoplasmic (1141 aa).

The 'HIGH' region motif lies at 50 to 60; the sequence is PFATGLPHYGH. The 'KMSKS' region signature appears at 601–605; that stretch reads KMSKS. ATP is bound at residue lysine 604.

This sequence belongs to the class-I aminoacyl-tRNA synthetase family.

The protein localises to the cytoplasm. The enzyme catalyses tRNA(Ile) + L-isoleucine + ATP = L-isoleucyl-tRNA(Ile) + AMP + diphosphate. The sequence is that of Isoleucine--tRNA ligase, cytoplasmic from Caenorhabditis elegans.